The following is a 131-amino-acid chain: Small ribosomal subunit protein uS11 (131 aa).

It belongs to the universal ribosomal protein uS11 family. In terms of assembly, part of the 30S ribosomal subunit. Interacts with proteins S7 and S18. Binds to IF-3.

Its function is as follows. Located on the platform of the 30S subunit, it bridges several disparate RNA helices of the 16S rRNA. Forms part of the Shine-Dalgarno cleft in the 70S ribosome. This is Small ribosomal subunit protein uS11 from Wolinella succinogenes (strain ATCC 29543 / DSM 1740 / CCUG 13145 / JCM 31913 / LMG 7466 / NCTC 11488 / FDC 602W) (Vibrio succinogenes).